A 753-amino-acid chain; its full sequence is Nigerose phosphorylase (753 aa).

348 to 349 (WD) is a substrate binding site. The Proton donor role is filled by Glu-490. 604–605 (KQ) lines the substrate pocket.

The protein belongs to the glycosyl hydrolase 65 family. As to quaternary structure, homodimer.

Its subcellular location is the cytoplasm. The catalysed reaction is nigerose + phosphate = beta-D-glucose 1-phosphate + D-glucose. With respect to regulation, does not require divalent metal ions. Catalyzes the reversible phosphorolysis of nigerose. Also shows a weak activity on kojibiose. This Lachnoclostridium phytofermentans (strain ATCC 700394 / DSM 18823 / ISDg) (Clostridium phytofermentans) protein is Nigerose phosphorylase.